The following is a 646-amino-acid chain: MSLPKKKIGIFAFFLLTVFTITLKTYFSYYVDFSLGVKGLVQNLILLMNPYSLIALVLSVFLFFKGKKAFWFIFIGGFLLTFLLYANVVYFRFFSDFLTFSTLNQAGNVESMGGAVSASFKWYDFVYFIDTIIYLAILIFKRKWLDNRAFSKKFVPVVMATSVALFFLNLAFAETDRPELLTRTFDHKYLVKYLGPYNFTVYDGVKTIENNQQKALASEDDLTKVLNYTKQKRTEPNPEYYGAAKKKNIIKIHLESFQTFLINKKVNGKEVTPFLNKLSSGNQDFTYFPNFFHQTGQGKTSDSEFTMDNSLYGLPQGSAYSLKGDNTYQSLPAILDQKQGYTSNVMHGDYKTFWNRDQVYKHFGIDNFYDATYYDMSDDNIVNLGLKDKPFFKASADYQSKMKKPFYSHLITLTNHYPFTLDEEDASIDKPNTGDSTVDGYIQTAHYLDQALEEYITDLKKKGLYDNSVIMIYGDHYGISENHNNAMEKLLGEKITPAKFTDLNRTGFWLKVPGKSGGVNKEYAGQMDVMPTLLHLVGIDSKNYLMFGSDMFSKQHNNVVPFRNGDFITEDYKYVNGKIYSNKDNELLTEKPKDFDKNKKQVEKDLEMSDSVLNGDLFRFYKNPDFKKVNPGKYEYKSGPKGNEKK.

At 1–7 (MSLPKKK) the chain is on the cytoplasmic side. A helical membrane pass occupies residues 8 to 28 (IGIFAFFLLTVFTITLKTYFS). Residues 29–43 (YYVDFSLGVKGLVQN) are Extracellular-facing. Residues 44–64 (LILLMNPYSLIALVLSVFLFF) form a helical membrane-spanning segment. The Cytoplasmic segment spans residues 65-68 (KGKK). Residues 69–89 (AFWFIFIGGFLLTFLLYANVV) traverse the membrane as a helical segment. At 90 to 119 (YFRFFSDFLTFSTLNQAGNVESMGGAVSAS) the chain is on the extracellular side. A helical membrane pass occupies residues 120-140 (FKWYDFVYFIDTIIYLAILIF). Topologically, residues 141–153 (KRKWLDNRAFSKK) are cytoplasmic. A helical transmembrane segment spans residues 154–174 (FVPVVMATSVALFFLNLAFAE). Residues 175–646 (TDRPELLTRT…KSGPKGNEKK (472 aa)) are Extracellular-facing. E255 and T300 together coordinate Mn(2+). Residue T300 is part of the active site. Residue H416 coordinates substrate. Residues D475 and H476 each contribute to the Mn(2+) site.

Belongs to the LTA synthase family. Proteolytically cleaved.

Its subcellular location is the cell membrane. The protein localises to the secreted. It participates in cell wall biogenesis; lipoteichoic acid biosynthesis. Catalyzes the polymerization of lipoteichoic acid (LTA) polyglycerol phosphate, a reaction that presumably uses phosphatidylglycerol (PG) as substrate. Is required for staphylococcal growth and cell division process. The chain is Lipoteichoic acid synthase (ltaS) from Staphylococcus epidermidis (strain ATCC 35984 / DSM 28319 / BCRC 17069 / CCUG 31568 / BM 3577 / RP62A).